A 251-amino-acid chain; its full sequence is MFEKGSLIPYLTAGDPSVEKTLEFLLAVEEFAGLIELGIPFSDPMADGKTIQESHYRALRNGFKLDDTFRILREFRRHSSTPVILMTYYNPVFRTGVKKFLGEAKASGADGILVVDLPVSHAGEFLDAAKEEGLKTVFLAAPNTPDERLREIDKASTGFVYLISLYGTTGARDRLPETAFEFVRRARKICNNKLAVGFGVSRREQVEELLKAGADGVVVGSALIELISRSENPVEELRRKVAELSGYSRAL.

Residues Glu36 and Asp47 each act as proton acceptor in the active site.

It belongs to the TrpA family. Tetramer of two alpha and two beta chains.

The enzyme catalyses (1S,2R)-1-C-(indol-3-yl)glycerol 3-phosphate + L-serine = D-glyceraldehyde 3-phosphate + L-tryptophan + H2O. It participates in amino-acid biosynthesis; L-tryptophan biosynthesis; L-tryptophan from chorismate: step 5/5. The alpha subunit is responsible for the aldol cleavage of indoleglycerol phosphate to indole and glyceraldehyde 3-phosphate. In Thermococcus kodakarensis (strain ATCC BAA-918 / JCM 12380 / KOD1) (Pyrococcus kodakaraensis (strain KOD1)), this protein is Tryptophan synthase alpha chain.